Consider the following 156-residue polypeptide: Small ribosomal subunit protein uS7 (156 aa).

It belongs to the universal ribosomal protein uS7 family. Part of the 30S ribosomal subunit. Contacts proteins S9 and S11.

Functionally, one of the primary rRNA binding proteins, it binds directly to 16S rRNA where it nucleates assembly of the head domain of the 30S subunit. Is located at the subunit interface close to the decoding center, probably blocks exit of the E-site tRNA. The protein is Small ribosomal subunit protein uS7 of Sinorhizobium medicae (strain WSM419) (Ensifer medicae).